Consider the following 148-residue polypeptide: Large ribosomal subunit protein bL9 (148 aa).

The protein belongs to the bacterial ribosomal protein bL9 family.

Binds to the 23S rRNA. The sequence is that of Large ribosomal subunit protein bL9 from Staphylococcus saprophyticus subsp. saprophyticus (strain ATCC 15305 / DSM 20229 / NCIMB 8711 / NCTC 7292 / S-41).